The following is a 198-amino-acid chain: MFSGIIQEVARVDLIHHYGDSMEIGIFARNLVDGVPGSSIAVDGICLTLVKREFELLFFDVTEETMACTTIKNYTVGSMVNLERSVRLGDEIGGHFVSGHVCGVGTIIAVEKSYMFFKAPTNLVPYVLEKGFIAIDGISLTIAQVRGDIFSVSVIPETRARTSLGYKQVGSHVNMEPDMMTKMQVDTVMRFQAEKIGK.

Lumazine-binding repeat units lie at residues 1 to 95 (MFSG…IGGH) and 96 to 188 (FVSG…VDTV). 2,4-dihydroxypteridine-binding positions include 4 to 6 (GII), 46 to 48 (CLT), 60 to 65 (DVTEET), 99 to 101 (GHV), Lys-130, 139 to 141 (SLT), and 153 to 158 (SVIPET).

As to quaternary structure, homotrimer.

It catalyses the reaction 2 6,7-dimethyl-8-(1-D-ribityl)lumazine + H(+) = 5-amino-6-(D-ribitylamino)uracil + riboflavin. It participates in cofactor biosynthesis; riboflavin biosynthesis; riboflavin from 2-hydroxy-3-oxobutyl phosphate and 5-amino-6-(D-ribitylamino)uracil: step 2/2. Functionally, catalyzes the dismutation of two molecules of 6,7-dimethyl-8-ribityllumazine, resulting in the formation of riboflavin and 5-amino-6-(D-ribitylamino)uracil. This chain is Riboflavin synthase (ribE), found in Chlamydia muridarum (strain MoPn / Nigg).